Reading from the N-terminus, the 188-residue chain is Putative manganese efflux pump MntP (188 aa).

Transmembrane regions (helical) follow at residues 8–28 (CLGL…GFVI), 39–59 (IALF…LTGL), 68–88 (IDHW…IYEA), 106–126 (LLAL…GLSL), 131–151 (ILLP…IGVF), and 164–184 (IEII…IEDL).

Belongs to the MntP (TC 9.B.29) family.

Its subcellular location is the cell inner membrane. Probably functions as a manganese efflux pump. In Crocosphaera subtropica (strain ATCC 51142 / BH68) (Cyanothece sp. (strain ATCC 51142)), this protein is Putative manganese efflux pump MntP.